The chain runs to 706 residues: Elongation factor G (706 aa).

Residues 8–290 (NRYRNIGICA…AVIDYLPAPT (283 aa)) form the tr-type G domain. Residues 17–24 (AHVDAGKT), 88–92 (DTPGH), and 142–145 (NKMD) contribute to the GTP site.

This sequence belongs to the TRAFAC class translation factor GTPase superfamily. Classic translation factor GTPase family. EF-G/EF-2 subfamily.

The protein localises to the cytoplasm. In terms of biological role, catalyzes the GTP-dependent ribosomal translocation step during translation elongation. During this step, the ribosome changes from the pre-translocational (PRE) to the post-translocational (POST) state as the newly formed A-site-bound peptidyl-tRNA and P-site-bound deacylated tRNA move to the P and E sites, respectively. Catalyzes the coordinated movement of the two tRNA molecules, the mRNA and conformational changes in the ribosome. This is Elongation factor G from Stutzerimonas stutzeri (strain A1501) (Pseudomonas stutzeri).